Here is a 550-residue protein sequence, read N- to C-terminus: Glucose-6-phosphate isomerase (550 aa).

The active-site Proton donor is the glutamate 356. Active-site residues include histidine 387 and lysine 515.

Belongs to the GPI family.

The protein localises to the cytoplasm. The enzyme catalyses alpha-D-glucose 6-phosphate = beta-D-fructose 6-phosphate. Its pathway is carbohydrate biosynthesis; gluconeogenesis. The protein operates within carbohydrate degradation; glycolysis; D-glyceraldehyde 3-phosphate and glycerone phosphate from D-glucose: step 2/4. In terms of biological role, catalyzes the reversible isomerization of glucose-6-phosphate to fructose-6-phosphate. The protein is Glucose-6-phosphate isomerase of Syntrophobacter fumaroxidans (strain DSM 10017 / MPOB).